The primary structure comprises 865 residues: Leucine--tRNA ligase (865 aa).

Positions 48-58 match the 'HIGH' region motif; sequence PYPSGQLHVGH. The 'KMSKS' region motif lies at 626-630; sequence KMSKS. Residue Lys-629 coordinates ATP.

Belongs to the class-I aminoacyl-tRNA synthetase family.

It is found in the cytoplasm. The enzyme catalyses tRNA(Leu) + L-leucine + ATP = L-leucyl-tRNA(Leu) + AMP + diphosphate. The sequence is that of Leucine--tRNA ligase from Gluconobacter oxydans (strain 621H) (Gluconobacter suboxydans).